The sequence spans 512 residues: GMP synthase [glutamine-hydrolyzing] (512 aa).

Residues 7–197 enclose the Glutamine amidotransferase type-1 domain; that stretch reads TIIVLDFGSQ…VFGVCGCSEG (191 aa). Catalysis depends on cysteine 84, which acts as the Nucleophile. Active-site residues include histidine 171 and glutamate 173. The 190-residue stretch at 198 to 387 folds into the GMPS ATP-PPase domain; sequence WNMENFIEVE…LGIPDEIVWR (190 aa). Residue 225 to 231 coordinates ATP; the sequence is SGGVDSS.

As to quaternary structure, homodimer.

The catalysed reaction is XMP + L-glutamine + ATP + H2O = GMP + L-glutamate + AMP + diphosphate + 2 H(+). Its pathway is purine metabolism; GMP biosynthesis; GMP from XMP (L-Gln route): step 1/1. Its function is as follows. Catalyzes the synthesis of GMP from XMP. In Bacillus cereus (strain ATCC 10987 / NRS 248), this protein is GMP synthase [glutamine-hydrolyzing].